The sequence spans 329 residues: Malate dehydrogenase (329 aa).

12–18 is an NAD(+) binding site; sequence GAAGQIG. Residues arginine 93 and arginine 99 each contribute to the substrate site. NAD(+) is bound by residues asparagine 106, glutamine 113, and 130 to 132; that span reads VGN. Residues asparagine 132 and arginine 163 each coordinate substrate. Histidine 188 (proton acceptor) is an active-site residue.

It belongs to the LDH/MDH superfamily. MDH type 2 family.

The catalysed reaction is (S)-malate + NAD(+) = oxaloacetate + NADH + H(+). Strongly inhibited by Hg(2+) and Zn(2+). Activated by Na(+), NH(4)(+), Ca(2+), Cu(2+) and Mg(2+). Functionally, catalyzes the reversible oxidation of malate to oxaloacetate. Exhibits remarkably higher catalytic efficiency for oxaloacetate reduction than for malate oxidation in vitro. Highly specific for NAD(H). Can also use NADPH for oxaloacetate reduction, but catalytic efficiency is 97-fold higher with NADH. No activity detected with NADP(+) and malate. The polypeptide is Malate dehydrogenase (Streptomyces avermitilis (strain ATCC 31267 / DSM 46492 / JCM 5070 / NBRC 14893 / NCIMB 12804 / NRRL 8165 / MA-4680)).